The following is a 146-amino-acid chain: Peptidyl-lysine N-acetyltransferase YiaC (146 aa).

An N-acetyltransferase domain is found at 1–143 (MIREAQRSEL…PTWIMSWPVV (143 aa)).

This sequence belongs to the acetyltransferase family.

The catalysed reaction is L-lysyl-[protein] + acetyl-CoA = N(6)-acetyl-L-lysyl-[protein] + CoA + H(+). Functionally, N-epsilon-lysine acetyltransferase that catalyzes acetylation of a large number of proteins. Overexpression inhibits motility. In Escherichia coli (strain K12), this protein is Peptidyl-lysine N-acetyltransferase YiaC (yiaC).